A 241-amino-acid chain; its full sequence is MQSWVEVSLNTPAQLSLPLYLPDDETFASFWPGDNASLLAALQNVLRQEHSGYIYLWAREGAGRSHLLHAACAELSQRGDAVGYVPLDKRTWFVPEVLDGMEHLSLVCIDNIECVAGDELWEMAIFDLYNRILESGKTRLLITGDRPPRQLNLGLPDLASRLDWGQIYKLQPLSDEDKLQALQLRARLRGFELPEDVGRFLLKRLDREMRTLFMTLDQLDHASITAQRKLTIPFVKEILKL.

This sequence belongs to the DnaA family. HdA subfamily. The active form seems to be an ADP-bound monomer. Forms the RIDA complex (regulatory inactivation of DnaA) of ATP-DnaA, ADP-Hda and the DNA-loaded beta sliding clamp (dnaN).

In terms of biological role, mediates the interaction of DNA replication initiator protein DnaA with DNA polymerase subunit beta sliding clamp (dnaN). Stimulates hydrolysis of ATP-DnaA to ADP-DnaA, rendering DnaA inactive for reinitiation, a process called regulatory inhibition of DnaA or RIDA. The polypeptide is DnaA regulatory inactivator Hda (Salmonella arizonae (strain ATCC BAA-731 / CDC346-86 / RSK2980)).